Here is a 42-residue protein sequence, read N- to C-terminus: Pelovaterin (42 aa).

Cystine bridges form between C8–C38, C16–C32, and C24–C39.

The protein resides in the secreted. Its subcellular location is the extracellular space. The protein localises to the extracellular matrix. In terms of biological role, induces the nucleation and stabilization of vaterite, one of the crystalline polymorphs of calcium carbonate. Exhibits strong antimicrobial activity against Pseudomonas aeruginosa and Proteus vulgaris. The protein is Pelovaterin of Pelodiscus sinensis (Chinese softshell turtle).